The following is a 115-amino-acid chain: NADH-ubiquinone oxidoreductase chain 3 (115 aa).

The next 3 helical transmembrane spans lie at 3-23 (LPLALTTSITLTLLLVTIAFW), 55-75 (FFLVAITFLLFDLEIALLLPL), and 86-106 (LMLTVALVLITILAAGLAYEW).

It belongs to the complex I subunit 3 family. As to quaternary structure, core subunit of respiratory chain NADH dehydrogenase (Complex I) which is composed of 45 different subunits. Interacts with TMEM186. Interacts with TMEM242.

The protein localises to the mitochondrion inner membrane. The catalysed reaction is a ubiquinone + NADH + 5 H(+)(in) = a ubiquinol + NAD(+) + 4 H(+)(out). Its function is as follows. Core subunit of the mitochondrial membrane respiratory chain NADH dehydrogenase (Complex I) which catalyzes electron transfer from NADH through the respiratory chain, using ubiquinone as an electron acceptor. Essential for the catalytic activity of complex I. The protein is NADH-ubiquinone oxidoreductase chain 3 of Lemur catta (Ring-tailed lemur).